The chain runs to 958 residues: Protein translocase subunit SecA (958 aa).

Residues Q87, 105–109 (GEGKT), and D524 each bind ATP. The tract at residues 598–617 (RRIDNQLRGRSGRQGDPGRS) is disordered. 4 residues coordinate Zn(2+): C939, C941, C950, and H951.

This sequence belongs to the SecA family. In terms of assembly, monomer and homodimer. Part of the essential Sec protein translocation apparatus which comprises SecA, SecYEG and auxiliary proteins SecDF-YajC and YidC. It depends on Zn(2+) as a cofactor.

It is found in the cell inner membrane. It localises to the cytoplasm. The enzyme catalyses ATP + H2O + cellular proteinSide 1 = ADP + phosphate + cellular proteinSide 2.. Functionally, part of the Sec protein translocase complex. Interacts with the SecYEG preprotein conducting channel. Has a central role in coupling the hydrolysis of ATP to the transfer of proteins into and across the cell membrane, serving both as a receptor for the preprotein-SecB complex and as an ATP-driven molecular motor driving the stepwise translocation of polypeptide chains across the membrane. The polypeptide is Protein translocase subunit SecA (Methylobacterium sp. (strain 4-46)).